The following is a 363-amino-acid chain: MALYIGVMSGTSLDGLDIALIEQSSAINLVATHYIPMPDTLRAELLGLCAGGPDEIARSAIAQQNWVKLAAQGIHTLLEQQQLKPEAIRAIGSHGQTIRHEPARGFTVQIGNPALLTELTGITVVSDFRSRDVAAGGQGAPLVPAFHEALFEERTGNRAVLNVGGFSNLSLIEPNKPVAGFDCGPGNVLMDAWIHQQRGENYDRNGQWAASGKVEPTLLKALLSDPFFVTQGPKSTGREVFNLPWLEQQLSCLPGFAAENVQATLLELTALTIVESLQSAQSNTEELLVCGGGAHNVTLMKRLADLLPNAKVASTATHGVDPDWVEAMAFAWLAHCCLEGIAANRPSVTGAKGLRVLGAIYPN.

10-17 (GTSLDGLD) serves as a coordination point for ATP.

The protein belongs to the anhydro-N-acetylmuramic acid kinase family.

The catalysed reaction is 1,6-anhydro-N-acetyl-beta-muramate + ATP + H2O = N-acetyl-D-muramate 6-phosphate + ADP + H(+). The protein operates within amino-sugar metabolism; 1,6-anhydro-N-acetylmuramate degradation. It participates in cell wall biogenesis; peptidoglycan recycling. Catalyzes the specific phosphorylation of 1,6-anhydro-N-acetylmuramic acid (anhMurNAc) with the simultaneous cleavage of the 1,6-anhydro ring, generating MurNAc-6-P. Is required for the utilization of anhMurNAc either imported from the medium or derived from its own cell wall murein, and thus plays a role in cell wall recycling. The sequence is that of Anhydro-N-acetylmuramic acid kinase from Pseudomonas fluorescens (strain Pf0-1).